The chain runs to 255 residues: Taurine import ATP-binding protein TauB (255 aa).

The ABC transporter domain occupies 2–229; sequence LNVSGLWAEY…RYAEGEPCRA (228 aa). Residue 34–41 coordinates ATP; the sequence is GPSGCGKT.

The protein belongs to the ABC transporter superfamily. Taurine importer (TC 3.A.1.17.1) family. In terms of assembly, the complex is composed of two ATP-binding proteins (TauB), two transmembrane proteins (TauC) and a solute-binding protein (TauA).

Its subcellular location is the cell inner membrane. It catalyses the reaction taurine(out) + ATP + H2O = taurine(in) + ADP + phosphate + H(+). In terms of biological role, part of the ABC transporter complex TauABC involved in taurine import. Responsible for energy coupling to the transport system. The chain is Taurine import ATP-binding protein TauB from Yersinia pseudotuberculosis serotype I (strain IP32953).